A 204-amino-acid chain; its full sequence is MCEGEKKKDSSSGALYCVNLALRIVVLGLAVAAAALMATASQCTIFLYYGGPLHTITYKDFGPFVYLVVASSIGAFMEAIAIFLTICKKKDGTPAKVLLPLLDAAVPVLLYSATAAAFAAGDMSYCAVGKRVGVCTTAAAGNFCNQVHIAMYVSLAAGVALLVAEIVKHWPDSGKKKEGGGGGCGSDSDSDKSTPCHHGCHSKH.

The Cytoplasmic segment spans residues 1-19; the sequence is MCEGEKKKDSSSGALYCVN. A helical membrane pass occupies residues 20–40; that stretch reads LALRIVVLGLAVAAAALMATA. Topologically, residues 41-63 are extracellular; the sequence is SQCTIFLYYGGPLHTITYKDFGP. The helical transmembrane segment at 64–84 threads the bilayer; sequence FVYLVVASSIGAFMEAIAIFL. Residues 85 to 97 are Cytoplasmic-facing; that stretch reads TICKKKDGTPAKV. The chain crosses the membrane as a helical span at residues 98-118; the sequence is LLPLLDAAVPVLLYSATAAAF. Residues 119-146 are Extracellular-facing; it reads AAGDMSYCAVGKRVGVCTTAAAGNFCNQ. Residues 147–167 traverse the membrane as a helical segment; it reads VHIAMYVSLAAGVALLVAEIV. Residues 168 to 204 are Cytoplasmic-facing; it reads KHWPDSGKKKEGGGGGCGSDSDSDKSTPCHHGCHSKH. Residues 173–204 are disordered; that stretch reads SGKKKEGGGGGCGSDSDSDKSTPCHHGCHSKH.

Belongs to the Casparian strip membrane proteins (CASP) family. Homodimer and heterodimers.

Its subcellular location is the cell membrane. This Oryza sativa subsp. japonica (Rice) protein is CASP-like protein 1U3.